The chain runs to 142 residues: Hemoglobin subunit alpha (142 aa).

An N-acetylserine modification is found at Ser1. Residues 1–142 (SLSDKDKAAV…LSLALAEKYR (142 aa)) enclose the Globin domain. Heme b is bound by residues His59 and His88.

It belongs to the globin family. As to quaternary structure, heterotetramer of two alpha chains and two beta chains. In terms of tissue distribution, red blood cells.

Its function is as follows. Involved in oxygen transport from gills to the various peripheral tissues. The protein is Hemoglobin subunit alpha of Lycodes reticulatus (Arctic eelpout).